The primary structure comprises 247 residues: Dynein axonemal assembly factor 19 (247 aa).

Positions 12–32 form a coiled coil; sequence LEKELHSALQADRKYQRENDA.

Belongs to the DNAAF19/PR46b family. In terms of assembly, homodimer. In terms of tissue distribution, expressed in all cells bearing motile cilia.

The protein localises to the cytoplasm. It localises to the cell projection. Its subcellular location is the cilium. It is found in the flagellum. In terms of biological role, dynein-attachment factor required for cilia motility. The protein is Dynein axonemal assembly factor 19 (dnaaf19) of Danio rerio (Zebrafish).